A 314-amino-acid chain; its full sequence is MKNKKQPVVILVGPTAVGKTKLSIGLAKMLNAEIISGDSMQVYKGMDIGTAKVTEEETEGVPHHLIDILEPSDTFSTADYQKMVRGKITEIADRGKLPMIVGGTGLYIQSVLYDYTFTENSGDPVFRERMEKLAAEEGAEALHAKLAAADPEAAAAIHQNNTRRVIRALEILHVSGKTMSEHLKTQKRELLYNAVLIGLTMDREVLYGRINERVDLMLETGLLDEVKRLYDMNIRDSQSIQAIGYKELYEYLDGKVPLPQAVEQLKQNSRRYAKRQLTWFRNKMPVSWTDMTPPVDIEQKKKEIFECIAGKLEI.

Residue 13–20 (GPTAVGKT) participates in ATP binding. 15-20 (TAVGKT) serves as a coordination point for substrate. Residues 38-41 (DSMQ) form an interaction with substrate tRNA region.

It belongs to the IPP transferase family. As to quaternary structure, monomer. Mg(2+) is required as a cofactor.

It carries out the reaction adenosine(37) in tRNA + dimethylallyl diphosphate = N(6)-dimethylallyladenosine(37) in tRNA + diphosphate. Its function is as follows. Catalyzes the transfer of a dimethylallyl group onto the adenine at position 37 in tRNAs that read codons beginning with uridine, leading to the formation of N6-(dimethylallyl)adenosine (i(6)A). This is tRNA dimethylallyltransferase from Bacillus velezensis (strain DSM 23117 / BGSC 10A6 / LMG 26770 / FZB42) (Bacillus amyloliquefaciens subsp. plantarum).